Reading from the N-terminus, the 530-residue chain is MSLLNCENSCGSSQSSSDCCAAMAASCSAAVKDDSVSGSASTGNLSSSFMEEIQGYDVEFDPPLESKYECPICLMALREAVQTPCGHRFCKACIIKSIRDAGHKCPVDNEILLENQLFPDNFAKREILSLTVKCPNKGCLQKMELRHLEDHQVHCEFALVNCPQCQRPFQKCQVNTHIIEDCPRRQVSCVNCAVSMAYEEKEIHDQSCPLANIICEYCGTILIREQMPNHYDLDCPTAPIPCTFSVFGCHEKMQRNHLARHLQENTQLHMRLLAQAVHNVNLALRPCDAASPSRGCRPEDPNYEETIKQLESRLVRQDHQIRELTAKMETQSMYVGELKRTIRTLEDKVAEMEAQQCNGIYIWKIGNFGMHLKSQEEERPVVIHSPGFYTGRPGYKLCMRLHLQLPTAQRCANYISLFVHTMQGEYDSHLPWPFQGTIRLTILDQSEALIRQNHEEVMDAKPELLAFQRPTIPRNPKGFGYVTFMHLEALRQGTFIKDDTLLVRCEVSTRFDMGGLRKEGFQPRSTDAGV.

Positions 1-362 (MSLLNCENSC…EAQQCNGIYI (362 aa)) are interaction with TAX1BP1. The RING-type zinc finger occupies 70–109 (CPICLMALREAVQTPCGHRFCKACIIKSIRDAGHKCPVDN). Residue Lys124 forms a Glycyl lysine isopeptide (Lys-Gly) (interchain with G-Cter in SUMO); alternate linkage. A Glycyl lysine isopeptide (Lys-Gly) (interchain with G-Cter in ubiquitin); alternate cross-link involves residue Lys124. A Glycyl lysine isopeptide (Lys-Gly) (interchain with G-Cter in SUMO) cross-link involves residue Lys142. 2 TRAF-type zinc fingers span residues 150-202 (DHQV…EEKE) and 203-259 (IHDQ…NHLA). Residues 299–356 (EDPNYEETIKQLESRLVRQDHQIRELTAKMETQSMYVGELKRTIRTLEDKVAEMEAQQ) are a coiled coil. Lys327 is covalently cross-linked (Glycyl lysine isopeptide (Lys-Gly) (interchain with G-Cter in ubiquitin)). Residues 358–507 (NGIYIWKIGN…DDTLLVRCEV (150 aa)) form the MATH domain. The interaction with TANK stretch occupies residues 363 to 530 (WKIGNFGMHL…FQPRSTDAGV (168 aa)). A Glycyl lysine isopeptide (Lys-Gly) (interchain with G-Cter in SUMO) cross-link involves residue Lys461.

It belongs to the TNF receptor-associated factor family. A subfamily. As to quaternary structure, homotrimer. Homooligomer. N-terminal region is dimeric while C-terminal region is trimeric; maybe providing a mode of oligomerization. Upon IL1B treatment, forms a complex with PELI1, IRAK1, IRAK4 and MYD88; this complex recruits MAP3K7/TAK1, TAB1 and TAB2 to mediate NF-kappa-B activation. Direct binding of SMAD6 to PELI1 prevents the complex formation and hence negatively regulates IL1R-TLR signaling and eventually NF-kappa-B-mediated gene expression. Binds to TNFRSF5/CD40 and TNFRSF11A/RANK. Associates with NGFR, TNFRSF17, IRAK2, IRAK3, PELI2, PELI3, RIPK2, MAP3K1, MAP3K5, MAP3K14, CSK, TRAF, TRAF-interacting protein TRIP and TNF receptor associated protein TDP2. Binds UBE2V1. Interacts with MAVS/IPS1. Interacts with TAX1BP1; this interaction mediates deubiquitination of TRAF6 and inhibition of NF-kappa-B activation. Interacts with IL17R. Interacts with SQSTM1 bridging NTRK1 and NGFR. Forms a ternary complex with SQSTM1 and PRKCZ. Interacts with IL1RL1. Interacts with AJUBA. Interacts with TRAFD1. Interacts with TICAM2. Interacts with ZFAND5. Interacts with ARRB1 and ARRB2. Interacts with MAP3K7 and TAB1/MAP3K7IP1; during IL-1 signaling. Interacts with UBE2N. Interacts with TGFBR1, HDAC1 and RANGAP1. Interacts with AKT1, AKT2 and AKT3. Interacts (via TRAF domains) with NUMBL (via C-terminal). Interacts (via TRAF domains) with DYNC2I2 (via WD domains). Interacts with RBCK1. Interacts with LIMD1 (via LIM domains). Interacts with RSAD2/viperin. Interacts with IFIT3 (via N-terminus). Interacts (via C-terminus) with EIF2AK2/PKR (via the kinase catalytic domain). Interacts with CARD14. Interacts with CD40 and MAP3K8; the interaction is required for ERK activation. Interacts with TICAM1 and this interaction is enhanced in the presence of WDFY1. Interacts with TANK; this interaction increases in response to DNA damage. Interacts with USP10; this interaction increases in response to DNA damage. Interacts with ZC3H12A; this interaction increases in response to DNA damage and is stimulated by TANK. Interacts with WDFY3. Interacts with TRIM13. Interacts with GPS2. Interacts (via C-terminus) with SASH1. Interacts with LRRC19. Interacts with IL17RA and TRAF3IP2. Interacts with TOMM70. Interacts with AMBRA1; interaction is required to mediate 'Lys-63'-linked ubiquitination of ULK1. Interacts with CRBN; this interaction inhibits TLR4-mediated signaling by preventing TRAF6-mediated ubiquitination of ECSIT. (Microbial infection) Interacts (via N-terminal RING domain) with Toxoplasma gondii GRA7; the interaction plays a role in GRA7-induced pro-inflammatory cytokine production in mouse macrophages. In terms of processing, sumoylated on Lys-124, Lys-142 and Lys-461 with SUMO1. Polyubiquitinated on Lys-124 by TRAF3IP2; after cell stimulation with IL17A. Polyubiquitinated; after cell stimulation with IL1B or TGFB. This ligand-induced cell stimulation leads to dimerization/oligomerization of TRAF6 molecules, followed by auto-ubiquitination which involves UBE2N and UBE2V1 and leads to TRAF6 activation. This 'Lys-63' site-specific poly-ubiquitination appears to be associated with the activation of signaling molecules. Endogenous autoubiquitination occurs only for the cytoplasmic form. Deubiquitinated by USP10 in a TANK-dependent manner, leading to the negative regulation of NF-kappa-B signaling upon DNA damage. LRRC19 induces 'Lys-63' ubiquitination. Ubiquitinated at Lys-327 by the SCF(FBXL2) complex, leading to its degradation by the proteasome. As to expression, highly expressed in brain, lung, liver, skeletal muscle, and kidney; lower expression in heart, spleen, and testis.

The protein localises to the cytoplasm. The protein resides in the cell cortex. It is found in the nucleus. Its subcellular location is the lipid droplet. The catalysed reaction is S-ubiquitinyl-[E2 ubiquitin-conjugating enzyme]-L-cysteine + [acceptor protein]-L-lysine = [E2 ubiquitin-conjugating enzyme]-L-cysteine + N(6)-ubiquitinyl-[acceptor protein]-L-lysine.. It participates in protein modification; protein ubiquitination. Functionally, E3 ubiquitin ligase that, together with UBE2N and UBE2V1, mediates the synthesis of 'Lys-63'-linked-polyubiquitin chains conjugated to proteins, such as ECSIT, IKBKG, IRAK1, AKT1 and AKT2. Also mediates ubiquitination of free/unanchored polyubiquitin chain that leads to MAP3K7 activation. Leads to the activation of NF-kappa-B and JUN. Seems to also play a role in dendritic cells (DCs) maturation and/or activation. Represses c-Myb-mediated transactivation, in B-lymphocytes. Adapter protein that seems to play a role in signal transduction initiated via TNF receptor, IL-1 receptor and IL-17 receptor. Regulates osteoclast differentiation by mediating the activation of adapter protein complex 1 (AP-1) and NF-kappa-B, in response to RANK-L stimulation. Together with MAP3K8, mediates CD40 signals that activate ERK in B-cells and macrophages, and thus may play a role in the regulation of immunoglobulin production. Acts as a regulator of the JNK and NF-kappa-B signaling pathways by initiating assembly of heterotypic 'Lys-63'-/'Lys-48'-linked branched ubiquitin chains that are then recognized by TAB2: TRAF6 catalyzes initial 'Lys-63'-linked-polyubiquitin chains that are then branched via 'Lys-48'-linked polyubiquitin by HUWE1. 'Lys-63'-/'Lys-48'-linked branched ubiquitin chains protect 'Lys-63'-linkages from CYLD deubiquitination. Also participates in the TCR signaling by ubiquitinating LAT. The protein is TNF receptor-associated factor 6 (Traf6) of Mus musculus (Mouse).